The primary structure comprises 96 residues: Small ribosomal subunit protein bS6 (96 aa).

The protein belongs to the bacterial ribosomal protein bS6 family.

Binds together with bS18 to 16S ribosomal RNA. The polypeptide is Small ribosomal subunit protein bS6 (Thermobifida fusca (strain YX)).